The sequence spans 315 residues: Cytochrome c biogenesis protein CcsA (315 aa).

Helical transmembrane passes span 15-35 (SCFL…GFGG), 39-59 (FSFT…LQLI), 73-93 (LYES…YIEV), 97-117 (TLFL…FTDF), 144-164 (VMIA…AYLV), 222-242 (TIGI…IWAN), 257-277 (WAFI…VGGW), and 283-303 (ALVA…VNLL).

The protein belongs to the CcmF/CycK/Ccl1/NrfE/CcsA family. May interact with Ccs1.

It is found in the plastid. The protein resides in the chloroplast thylakoid membrane. In terms of biological role, required during biogenesis of c-type cytochromes (cytochrome c6 and cytochrome f) at the step of heme attachment. The protein is Cytochrome c biogenesis protein CcsA of Chlorella vulgaris (Green alga).